The following is a 593-amino-acid chain: Maternal uncoordinated protein 2 (593 aa).

It belongs to the SCC4/mau-2 family. As to quaternary structure, may heterodimerize with scc-2/SCC2 to form the cohesin loading complex.

Its subcellular location is the nucleus. It is found in the nucleoplasm. The protein localises to the cytoplasm. In terms of biological role, plays an important role in the loading of the cohesin complex on to DNA. Forms a heterodimeric complex (also known as cohesin loading complex) with scc-2/SCC2 which mediates the loading of the cohesin complex onto chromatin. Required for normal development until the fourth larval stage. Functions cell autonomously to guide migrations during the development of the nervous system. Participates in the guidance of mechanosensory neuron AVM by a slt-1-independent mechanism. Regulates chromosome segregation in early embryos. This is Maternal uncoordinated protein 2 from Caenorhabditis elegans.